We begin with the raw amino-acid sequence, 205 residues long: Outer-membrane lipoprotein carrier protein (205 aa).

The first 21 residues, M1–A21, serve as a signal peptide directing secretion.

Belongs to the LolA family. In terms of assembly, monomer.

The protein resides in the periplasm. Functionally, participates in the translocation of lipoproteins from the inner membrane to the outer membrane. Only forms a complex with a lipoprotein if the residue after the N-terminal Cys is not an aspartate (The Asp acts as a targeting signal to indicate that the lipoprotein should stay in the inner membrane). The protein is Outer-membrane lipoprotein carrier protein of Francisella philomiragia subsp. philomiragia (strain ATCC 25017 / CCUG 19701 / FSC 153 / O#319-036).